Reading from the N-terminus, the 459-residue chain is Cysteine--tRNA ligase (459 aa).

Cys28 contacts Zn(2+). Positions 30–40 match the 'HIGH' region motif; it reads VTIYDLCHIGH. 3 residues coordinate Zn(2+): Cys209, His234, and Glu238. Residues 266 to 270 carry the 'KMSKS' region motif; it reads KMSKS. Lys269 lines the ATP pocket.

Belongs to the class-I aminoacyl-tRNA synthetase family. Monomer. It depends on Zn(2+) as a cofactor.

The protein localises to the cytoplasm. The catalysed reaction is tRNA(Cys) + L-cysteine + ATP = L-cysteinyl-tRNA(Cys) + AMP + diphosphate. In Shewanella piezotolerans (strain WP3 / JCM 13877), this protein is Cysteine--tRNA ligase.